We begin with the raw amino-acid sequence, 149 residues long: Large ribosomal subunit protein uL15 (149 aa).

The disordered stretch occupies residues 1 to 64 (MVELHDLQPH…GQTPLYMRIP (64 aa)). Positions 31–40 (TAGRGHKGQK) are enriched in basic residues.

This sequence belongs to the universal ribosomal protein uL15 family. Part of the 50S ribosomal subunit.

Functionally, binds to the 23S rRNA. The chain is Large ribosomal subunit protein uL15 from Aquifex aeolicus (strain VF5).